The chain runs to 167 residues: uncharacterized protein (167 aa).

The chain crosses the membrane as a helical span at residues 39–59; that stretch reads LSLFSLSPLFLLLSISSLIFS. Positions 92-122 form a coiled coil; that stretch reads LGTQIEMITQAMTTLESRVTDLQQESNDHRT. The disordered stretch occupies residues 134–167; it reads RDLGDENRPKPTTNKMIATGEQHKGEVSTSLFHD. The span at 154–167 shows a compositional bias: basic and acidic residues; sequence EQHKGEVSTSLFHD.

It localises to the mitochondrion membrane. This is an uncharacterized protein from Arabidopsis thaliana (Mouse-ear cress).